The sequence spans 91 residues: Small ribosomal subunit protein bS20 (91 aa).

Residues 1–25 are disordered; the sequence is MANSPSAKKRAKQAEKRRSHNASLR. The segment covering 7–20 has biased composition (basic residues); that stretch reads AKKRAKQAEKRRSH.

The protein belongs to the bacterial ribosomal protein bS20 family.

Functionally, binds directly to 16S ribosomal RNA. This is Small ribosomal subunit protein bS20 from Azotobacter vinelandii (strain DJ / ATCC BAA-1303).